Here is a 501-residue protein sequence, read N- to C-terminus: Ammonium transporter 1 member 1 (501 aa).

Transmembrane regions (helical) follow at residues 8 to 28, 46 to 66, 81 to 101, 128 to 148, 152 to 172, 199 to 219, 243 to 263, 333 to 353, 366 to 386, and 419 to 439; these read LAVL…GQLG, LLFS…LCAG, VLDA…FAFG, FLYQ…SIAE, FVAY…VVSH, FAGS…GALI, LVVL…PGSF, VVEP…LLGC, LEAA…TALF, and LIQI…LFFI. Threonine 460 carries the phosphothreonine modification. Phosphoserine is present on residues serine 475, serine 488, serine 490, and serine 492.

The protein belongs to the ammonia transporter channel (TC 1.A.11.2) family. As to quaternary structure, self interacts. Interacts with the receptor protein kinases CEPR2, At2g28990 and PAM74. As to expression, highly expressed in roots. Expressed in root tips, root hairs, root epidermis, rhizodermis, cortex and pericycle. Expressed in leaves epidermal and mesophyll cells.

Its subcellular location is the cell membrane. Functionally, high affinity ammonium transporter probably involved in ammonium uptake from the soil, long-distance transport to the shoots and re-uptake of apoplastic ammonium that derives from photorespiration in shoots. Contributes with AMT1-3 to the overall ammonium uptake capacity in roots under nitrogen-deficiency conditions. The chain is Ammonium transporter 1 member 1 (AMT1-1) from Arabidopsis thaliana (Mouse-ear cress).